The following is a 169-amino-acid chain: UPF0303 protein BCAN_A1444 (169 aa).

Belongs to the UPF0303 family.

In Brucella canis (strain ATCC 23365 / NCTC 10854 / RM-666), this protein is UPF0303 protein BCAN_A1444.